Reading from the N-terminus, the 1034-residue chain is Receptor-type guanylate cyclase gcy-25 (1034 aa).

The first 16 residues, 1-16, serve as a signal peptide directing secretion; that stretch reads MLLLLLLLKISTFVDS. Topologically, residues 17-409 are extracellular; sequence FQIGHLEFEN…YDNNLCSDFH (393 aa). N-linked (GlcNAc...) asparagine glycosylation is found at Asn28, Asn224, Asn301, Asn308, and Asn373. A helical transmembrane segment spans residues 410–430; it reads VFMIAAIVFSILLIPMAIAFY. At 431 to 1034 the chain is on the cytoplasmic side; the sequence is LQRKEHLIQQ…DNSKKMFLNV (604 aa). The 286-residue stretch at 464 to 749 folds into the Protein kinase domain; it reads RVSTISTARA…KITDAVNREF (286 aa). Residues 470–478 and Lys497 each bind ATP; that span reads TARASYSSI. Residues 758–785 adopt a coiled-coil conformation; that stretch reads IDQMIEMIDEYSANLEQIVAERTRELEQ. A Guanylate cyclase domain is found at 821–951; the sequence is TLLVVDVCQF…DTVNMACRMA (131 aa).

The protein belongs to the adenylyl cyclase class-4/guanylyl cyclase family. In terms of tissue distribution, expressed in AQR, PQR and URX sensory neurons.

It is found in the cell membrane. The catalysed reaction is GTP = 3',5'-cyclic GMP + diphosphate. Guanylate cyclase involved in the production of the second messenger cGMP. The sequence is that of Receptor-type guanylate cyclase gcy-25 from Caenorhabditis elegans.